The sequence spans 255 residues: Small ribosomal subunit protein eS1A (255 aa).

The span at 1–18 (MAVGKNKRLSKGKKGQKK) shows a compositional bias: basic residues. A disordered region spans residues 1–20 (MAVGKNKRLSKGKKGQKKRV). The residue at position 2 (Ala-2) is an N-acetylalanine; partial. Thr-245 is modified (phosphothreonine). Lys-248 participates in a covalent cross-link: Glycyl lysine isopeptide (Lys-Gly) (interchain with G-Cter in ubiquitin). The residue at position 254 (Thr-254) is a Phosphothreonine.

This sequence belongs to the eukaryotic ribosomal protein eS1 family. In terms of assembly, component of the small ribosomal subunit. Mature ribosomes consist of a small (40S) and a large (60S) subunit. The 40S subunit contains about 33 different proteins and 1 molecule of RNA (18S). The 60S subunit contains about 49 different proteins and 3 molecules of RNA (25S, 5.8S and 5S).

The protein localises to the cytoplasm. The polypeptide is Small ribosomal subunit protein eS1A (Saccharomyces cerevisiae (strain RM11-1a) (Baker's yeast)).